The chain runs to 250 residues: DNA repair protein RecO (250 aa).

The protein belongs to the RecO family.

Involved in DNA repair and RecF pathway recombination. The sequence is that of DNA repair protein RecO from Syntrophobacter fumaroxidans (strain DSM 10017 / MPOB).